The sequence spans 631 residues: Nucleoside triphosphatase I (631 aa).

The 163-residue stretch at 42-204 (FLGLDSMHSL…TMLVNLLRPG (163 aa)) folds into the Helicase ATP-binding domain. Residue 55–62 (HETGVGKT) participates in ATP binding. A DEXH box motif is present at residues 141–144 (DECH). A Helicase C-terminal domain is found at 367-532 (KFIDVCLGIL…EFVQLFRVFK (166 aa)). The segment at 457–524 (DIFILDMTWN…EIIQSKSKEF (68 aa)) is binding to the cap-specific mRNA (nucleoside-2'-O-)-methyltransferase.

It belongs to the helicase family. NPH I subfamily. As to quaternary structure, monomer. Interacts (via C-terminus) with RAP94/OPG109 (via N-terminus). Interacts with the cap-specific mRNA (nucleoside-2'-O-)-methyltransferase OPG102.

Its subcellular location is the virion. The catalysed reaction is a ribonucleoside 5'-triphosphate + H2O = a ribonucleoside 5'-diphosphate + phosphate + H(+). Functionally, DNA-dependent ATPase that acts as a 5' to 3' translocase on single-stranded DNA and thereby plays a role in transcription termination of viral early genes. Uses forward translocation in concert with the viral RNA polymerase RAP94/OPG109 subunit and the capping enzyme/VTF to catalyze release of UUUUUNU-containing nascent RNA from the elongation complex. In addition, acts as a positive elongation factor to assist transcription through problematic sequences. The protein is Nucleoside triphosphatase I (OPG123) of Vaccinia virus (strain Copenhagen) (VACV).